Reading from the N-terminus, the 212-residue chain is Pyridoxine/pyridoxamine 5'-phosphate oxidase (212 aa).

FMN-binding positions include 61 to 66 (RSVLLK), 76 to 77 (YT), Lys83, and Gln105. Lys66 is a substrate binding site. Residues Tyr123, Arg127, and Ser131 each contribute to the substrate site. FMN-binding positions include 140–141 (QS) and Trp185. 191–193 (RLH) provides a ligand contact to substrate. Arg195 contacts FMN.

It belongs to the pyridoxamine 5'-phosphate oxidase family. As to quaternary structure, homodimer. Requires FMN as cofactor.

It carries out the reaction pyridoxamine 5'-phosphate + O2 + H2O = pyridoxal 5'-phosphate + H2O2 + NH4(+). The enzyme catalyses pyridoxine 5'-phosphate + O2 = pyridoxal 5'-phosphate + H2O2. It participates in cofactor metabolism; pyridoxal 5'-phosphate salvage; pyridoxal 5'-phosphate from pyridoxamine 5'-phosphate: step 1/1. It functions in the pathway cofactor metabolism; pyridoxal 5'-phosphate salvage; pyridoxal 5'-phosphate from pyridoxine 5'-phosphate: step 1/1. Its function is as follows. Catalyzes the oxidation of either pyridoxine 5'-phosphate (PNP) or pyridoxamine 5'-phosphate (PMP) into pyridoxal 5'-phosphate (PLP). The polypeptide is Pyridoxine/pyridoxamine 5'-phosphate oxidase (Dichelobacter nodosus (strain VCS1703A)).